A 332-amino-acid chain; its full sequence is Heat-inducible transcription repressor HrcA (332 aa).

This sequence belongs to the HrcA family.

Its function is as follows. Negative regulator of class I heat shock genes (grpE-dnaK-dnaJ and groELS operons). Prevents heat-shock induction of these operons. The protein is Heat-inducible transcription repressor HrcA of Mycoplasma mobile (strain ATCC 43663 / 163K / NCTC 11711) (Mesomycoplasma mobile).